Here is a 571-residue protein sequence, read N- to C-terminus: Asparagine--tRNA ligase, cytoplasmic 3 (571 aa).

Residue Gly-2 is modified to N-acetylglycine. Positions 50–128 (VRIGGWVKTG…QSIELSVETV (79 aa)) form a DNA-binding region, OB. Residues 233-289 (DVEAARLIVKERGEAVAQLKVAKASKEEITASVAQLSVAKASLAHVEERLRLKPGLP) enclose the WHEP-TRS domain.

Belongs to the class-II aminoacyl-tRNA synthetase family.

The protein resides in the cytoplasm. It is found in the cytosol. The enzyme catalyses tRNA(Asn) + L-asparagine + ATP = L-asparaginyl-tRNA(Asn) + AMP + diphosphate + H(+). This is Asparagine--tRNA ligase, cytoplasmic 3 from Arabidopsis thaliana (Mouse-ear cress).